The chain runs to 395 residues: NAD(P)H-quinone oxidoreductase subunit H, chloroplastic (395 aa).

This sequence belongs to the complex I 49 kDa subunit family. NDH is composed of at least 16 different subunits, 5 of which are encoded in the nucleus.

Its subcellular location is the plastid. It is found in the chloroplast thylakoid membrane. It carries out the reaction a plastoquinone + NADH + (n+1) H(+)(in) = a plastoquinol + NAD(+) + n H(+)(out). The catalysed reaction is a plastoquinone + NADPH + (n+1) H(+)(in) = a plastoquinol + NADP(+) + n H(+)(out). Its function is as follows. NDH shuttles electrons from NAD(P)H:plastoquinone, via FMN and iron-sulfur (Fe-S) centers, to quinones in the photosynthetic chain and possibly in a chloroplast respiratory chain. The immediate electron acceptor for the enzyme in this species is believed to be plastoquinone. Couples the redox reaction to proton translocation, and thus conserves the redox energy in a proton gradient. In Staurastrum punctulatum (Green alga), this protein is NAD(P)H-quinone oxidoreductase subunit H, chloroplastic.